Reading from the N-terminus, the 301-residue chain is Probable alpha-L-glutamate ligase 1 (301 aa).

Residues 104–287 (LQLLSRKGIG…VTEPIVEYIE (184 aa)) enclose the ATP-grasp domain. Residues Lys-141, 178-179 (EY), Asp-187, and 211-213 (RSN) each bind ATP. 3 residues coordinate Mg(2+): Asp-248, Glu-260, and Asn-262. Residues Asp-248, Glu-260, and Asn-262 each contribute to the Mn(2+) site.

The protein belongs to the RimK family. It depends on Mg(2+) as a cofactor. Mn(2+) is required as a cofactor.

The sequence is that of Probable alpha-L-glutamate ligase 1 from Shewanella sp. (strain W3-18-1).